Consider the following 178-residue polypeptide: Large ribosomal subunit protein uL5 (178 aa).

Ala2 carries the post-translational modification N-acetylalanine. Residue Lys38 forms a Glycyl lysine isopeptide (Lys-Gly) (interchain with G-Cter in SUMO2) linkage. Phosphothreonine occurs at positions 44 and 47. At Lys52 the chain carries N6-acetyllysine; alternate. Lys52 participates in a covalent cross-link: Glycyl lysine isopeptide (Lys-Gly) (interchain with G-Cter in SUMO2); alternate. Lys85 bears the N6-acetyllysine mark. Lys154 is covalently cross-linked (Glycyl lysine isopeptide (Lys-Gly) (interchain with G-Cter in SUMO2)).

Belongs to the universal ribosomal protein uL5 family. In terms of assembly, component of the large ribosomal subunit (LSU). Part of the 5S RNP complex, which is a LSU subcomplex composed of the 5S RNA, RPL5 and RPL11. Component of a hexameric 5S RNP precursor complex, composed of 5S RNA, RRS1, RPF2/BXDC1, RPL5, RPL11 and HEATR3; this complex acts as a precursor for ribosome assembly. Interacts with PML. Interacts with MDM2 (via its RanBP2-type zinc finger domain); negatively regulates MDM2-mediated TP53 ubiquitination and degradation. Interacts with NOP53; retains RPL11 into the nucleolus.

It is found in the nucleus. The protein resides in the nucleolus. The protein localises to the cytoplasm. In terms of biological role, component of the ribosome, a large ribonucleoprotein complex responsible for the synthesis of proteins in the cell. The small ribosomal subunit (SSU) binds messenger RNAs (mRNAs) and translates the encoded message by selecting cognate aminoacyl-transfer RNA (tRNA) molecules. The large subunit (LSU) contains the ribosomal catalytic site termed the peptidyl transferase center (PTC), which catalyzes the formation of peptide bonds, thereby polymerizing the amino acids delivered by tRNAs into a polypeptide chain. The nascent polypeptides leave the ribosome through a tunnel in the LSU and interact with protein factors that function in enzymatic processing, targeting, and the membrane insertion of nascent chains at the exit of the ribosomal tunnel. As part of the 5S RNP/5S ribonucleoprotein particle it is an essential component of the LSU, required for its formation and the maturation of rRNAs. It also couples ribosome biogenesis to p53/TP53 activation. As part of the 5S RNP it accumulates in the nucleoplasm and inhibits MDM2, when ribosome biogenesis is perturbed, mediating the stabilization and the activation of TP53. Promotes nucleolar location of PML. This chain is Large ribosomal subunit protein uL5 (RPL11), found in Pongo abelii (Sumatran orangutan).